A 106-amino-acid chain; its full sequence is Vacuolar ATPase assembly integral membrane protein VMA21 homolog (106 aa).

Residues 1-26 form a disordered region; the sequence is MSNKNKKSGGAGNGAAQKQTRQQSHD. Topologically, residues 1–32 are cytoplasmic; it reads MSNKNKKSGGAGNGAAQKQTRQQSHDSQDYSS. A helical transmembrane segment spans residues 33–53; it reads FKIVLFYCMLIVFLPVVTFFL. Over 54–69 the chain is Lumenal; the sequence is LKGFVLDRFFSLSEVK. A helical transmembrane segment spans residues 70 to 90; that stretch reads VNIASAVGAVVSLHIALGLYI. The Cytoplasmic portion of the chain corresponds to 91–106; that stretch reads YRAYFGATGSKAVKED.

The protein belongs to the VMA21 family.

The protein resides in the endoplasmic reticulum membrane. It localises to the endoplasmic reticulum-Golgi intermediate compartment membrane. It is found in the cytoplasmic vesicle. The protein localises to the COPII-coated vesicle membrane. Functionally, required for the assembly of the V0 complex of the vacuolar ATPase (V-ATPase) in the endoplasmic reticulum. The chain is Vacuolar ATPase assembly integral membrane protein VMA21 homolog from Drosophila ananassae (Fruit fly).